The primary structure comprises 212 residues: FMN-dependent NADH:quinone oxidoreductase (212 aa).

FMN-binding positions include Ser-9, 15–17 (SVS), and 138–141 (TRGG).

This sequence belongs to the azoreductase type 1 family. Homodimer. The cofactor is FMN.

The catalysed reaction is 2 a quinone + NADH + H(+) = 2 a 1,4-benzosemiquinone + NAD(+). The enzyme catalyses N,N-dimethyl-1,4-phenylenediamine + anthranilate + 2 NAD(+) = 2-(4-dimethylaminophenyl)diazenylbenzoate + 2 NADH + 2 H(+). Quinone reductase that provides resistance to thiol-specific stress caused by electrophilic quinones. In terms of biological role, also exhibits azoreductase activity. Catalyzes the reductive cleavage of the azo bond in aromatic azo compounds to the corresponding amines. The polypeptide is FMN-dependent NADH:quinone oxidoreductase (Delftia acidovorans (strain DSM 14801 / SPH-1)).